Consider the following 417-residue polypeptide: D-amino acid dehydrogenase (417 aa).

Residue Ile3–Trp17 coordinates FAD.

Belongs to the DadA oxidoreductase family. It depends on FAD as a cofactor.

The enzyme catalyses a D-alpha-amino acid + A + H2O = a 2-oxocarboxylate + AH2 + NH4(+). It participates in amino-acid degradation; D-alanine degradation; NH(3) and pyruvate from D-alanine: step 1/1. Oxidative deamination of D-amino acids. In Aeromonas hydrophila subsp. hydrophila (strain ATCC 7966 / DSM 30187 / BCRC 13018 / CCUG 14551 / JCM 1027 / KCTC 2358 / NCIMB 9240 / NCTC 8049), this protein is D-amino acid dehydrogenase.